The chain runs to 236 residues: Ribonuclease HII (236 aa).

An RNase H type-2 domain is found at 21-214 (RTVAGVDEVG…LDALPRWQHL (194 aa)). Positions 27, 28, and 119 each coordinate a divalent metal cation.

It belongs to the RNase HII family. Requires Mn(2+) as cofactor. Mg(2+) is required as a cofactor.

It localises to the cytoplasm. The catalysed reaction is Endonucleolytic cleavage to 5'-phosphomonoester.. Endonuclease that specifically degrades the RNA of RNA-DNA hybrids. The protein is Ribonuclease HII of Streptomyces griseus subsp. griseus (strain JCM 4626 / CBS 651.72 / NBRC 13350 / KCC S-0626 / ISP 5235).